The chain runs to 466 residues: Ribulose bisphosphate carboxylase (466 aa).

Asparagine 111 contributes to the substrate binding site. Lysine 166 functions as the Proton acceptor in the catalytic mechanism. Substrate is bound at residue lysine 168. 3 residues coordinate Mg(2+): lysine 191, aspartate 193, and glutamate 194. Lysine 191 carries the post-translational modification N6-carboxylysine. The active-site Proton acceptor is the histidine 287. Positions 288, 321, and 368 each coordinate substrate.

This sequence belongs to the RuBisCO large chain family. Type II subfamily. Homodimer. Mg(2+) serves as cofactor.

The catalysed reaction is 2 (2R)-3-phosphoglycerate + 2 H(+) = D-ribulose 1,5-bisphosphate + CO2 + H2O. It catalyses the reaction D-ribulose 1,5-bisphosphate + O2 = 2-phosphoglycolate + (2R)-3-phosphoglycerate + 2 H(+). Functionally, ruBisCO catalyzes two reactions: the carboxylation of D-ribulose 1,5-bisphosphate, the primary event in carbon dioxide fixation, as well as the oxidative fragmentation of the pentose substrate. Both reactions occur simultaneously and in competition at the same active site. This chain is Ribulose bisphosphate carboxylase, found in Rhodospirillum rubrum (strain ATCC 11170 / ATH 1.1.1 / DSM 467 / LMG 4362 / NCIMB 8255 / S1).